Consider the following 234-residue polypeptide: MKITWLGHSAFRIETSKSKILLDPFLSHNASFSGQDIKDVSAGITHILLTHGHGDHVGDTVALAKETGAVVLANADLAAWLGSKGVDRIEMGNTGGTVTFGGFSATFTNALHSSAQITEDGVSHALGNANGLMLHFDDEASIFAMGDTDIFSDMALINELHQPDIGFVPIGDRFTMGGAVAALACQRYFSFKTAIPCHYGTFPIIDQTADKFVAGMEGSKTQARAMKPAESLSI.

Belongs to the UPF0173 family.

The protein is UPF0173 metal-dependent hydrolase RHE_CH01853 of Rhizobium etli (strain ATCC 51251 / DSM 11541 / JCM 21823 / NBRC 15573 / CFN 42).